Consider the following 313-residue polypeptide: MAESPAAEAIILPGAAAGGGVLPHLSGLQAPGTSPLTTSSVWDPTASADWDNERASNQCVLRIKRDIMSIYKEPPPGMFVVPDPHDMTKIHALITGPFDTPYEGGFFLFLFRCPPDYPIHPPRVKLMTTGNNTVRFNPNFYRNGKVCLSILGTWTGPAWSPAQSLSSVLISIQSLMTENPYHNEPGFEQERHSGDSKNYNECIRHETIRVAVCEMLEGKCQCPDALRSVMEKSFMEYYDFYEAVCKDRFHLQGQNMQDPFGEKRGHFDYQSLLSRLQTIHQRVREKHRKETVDIDSDSSSSETETDTQGSSNP.

Residues 58-212 form the UBC core domain; the sequence is QCVLRIKRDI…IRHETIRVAV (155 aa). The active-site Glycyl thioester intermediate is Cys147. A disordered region spans residues 283–313; the sequence is VREKHRKETVDIDSDSSSSETETDTQGSSNP. The segment covering 297-313 has biased composition (low complexity); sequence DSSSSETETDTQGSSNP.

The protein belongs to the ubiquitin-conjugating enzyme family.

It is found in the cytoplasm. The protein resides in the nucleus. It catalyses the reaction S-ubiquitinyl-[E1 ubiquitin-activating enzyme]-L-cysteine + [E2 ubiquitin-conjugating enzyme]-L-cysteine = [E1 ubiquitin-activating enzyme]-L-cysteine + S-ubiquitinyl-[E2 ubiquitin-conjugating enzyme]-L-cysteine.. It functions in the pathway protein modification; protein ubiquitination. In terms of biological role, catalyzes the covalent attachment of ubiquitin to other proteins. May be involved in apoptosis regulation. The sequence is that of Ubiquitin-conjugating enzyme E2 Z (ube2z) from Xenopus tropicalis (Western clawed frog).